A 42-amino-acid polypeptide reads, in one-letter code: Large ribosomal subunit protein bL36 (42 aa).

The protein belongs to the bacterial ribosomal protein bL36 family.

This is Large ribosomal subunit protein bL36 from Ehrlichia chaffeensis (strain ATCC CRL-10679 / Arkansas).